The chain runs to 369 residues: Flagellar P-ring protein 2 (369 aa).

An N-terminal signal peptide occupies residues 1–24 (MCAFAAILSLLSVLLMATSRSSDA).

This sequence belongs to the FlgI family. The basal body constitutes a major portion of the flagellar organelle and consists of four rings (L,P,S, and M) mounted on a central rod.

The protein localises to the periplasm. It is found in the bacterial flagellum basal body. Its function is as follows. Assembles around the rod to form the L-ring and probably protects the motor/basal body from shearing forces during rotation. The sequence is that of Flagellar P-ring protein 2 from Burkholderia thailandensis (strain ATCC 700388 / DSM 13276 / CCUG 48851 / CIP 106301 / E264).